The chain runs to 901 residues: Protein translocase subunit SecA (901 aa).

Residues glutamine 85, glycine 103 to threonine 107, and aspartate 510 each bind ATP. Residues threonine 847 to glutamine 901 form a disordered region. Residues arginine 848–serine 866 show a composition bias toward polar residues. Zn(2+)-binding residues include cysteine 882, cysteine 884, cysteine 893, and histidine 894. A compositionally biased stretch (basic residues) spans lysine 888 to glutamine 901.

This sequence belongs to the SecA family. In terms of assembly, monomer and homodimer. Part of the essential Sec protein translocation apparatus which comprises SecA, SecYEG and auxiliary proteins SecDF-YajC and YidC. The cofactor is Zn(2+).

The protein resides in the cell inner membrane. Its subcellular location is the cytoplasm. It catalyses the reaction ATP + H2O + cellular proteinSide 1 = ADP + phosphate + cellular proteinSide 2.. In terms of biological role, part of the Sec protein translocase complex. Interacts with the SecYEG preprotein conducting channel. Has a central role in coupling the hydrolysis of ATP to the transfer of proteins into and across the cell membrane, serving both as a receptor for the preprotein-SecB complex and as an ATP-driven molecular motor driving the stepwise translocation of polypeptide chains across the membrane. This is Protein translocase subunit SecA from Haemophilus influenzae (strain PittGG).